The primary structure comprises 621 residues: tRNA uridine 5-carboxymethylaminomethyl modification enzyme MnmG (621 aa).

An FAD-binding site is contributed by 8–13 (GAGHAG). 269–283 (GPRYCPSVEDKIFRF) provides a ligand contact to NAD(+).

This sequence belongs to the MnmG family. In terms of assembly, homodimer. Heterotetramer of two MnmE and two MnmG subunits. FAD is required as a cofactor.

The protein resides in the cytoplasm. Functionally, NAD-binding protein involved in the addition of a carboxymethylaminomethyl (cmnm) group at the wobble position (U34) of certain tRNAs, forming tRNA-cmnm(5)s(2)U34. The sequence is that of tRNA uridine 5-carboxymethylaminomethyl modification enzyme MnmG from Chlorobium chlorochromatii (strain CaD3).